We begin with the raw amino-acid sequence, 311 residues long: Putative F-box protein At1g31090 (311 aa).

The F-box domain occupies 4-53 (GANSDSIPTDLIYEILSRLSVKPITRFRCVSKLWESIICRQDFTELFHNR). The segment at 287–311 (RPAEQNTSTSSREDHLVRTVKRKRA) is disordered.

The chain is Putative F-box protein At1g31090 from Arabidopsis thaliana (Mouse-ear cress).